Consider the following 609-residue polypeptide: UvrABC system protein C (609 aa).

Residues 16-94 (SSAGVYRMYD…IKQYMPKYNV (79 aa)) form the GIY-YIG domain. The UVR domain occupies 203–238 (QQVISTLVAKMEQAAQQQEYEQAARFRDQIMALRKV).

The protein belongs to the UvrC family. As to quaternary structure, interacts with UvrB in an incision complex.

It is found in the cytoplasm. Functionally, the UvrABC repair system catalyzes the recognition and processing of DNA lesions. UvrC both incises the 5' and 3' sides of the lesion. The N-terminal half is responsible for the 3' incision and the C-terminal half is responsible for the 5' incision. This Shewanella putrefaciens (strain CN-32 / ATCC BAA-453) protein is UvrABC system protein C.